We begin with the raw amino-acid sequence, 197 residues long: Lactoylglutathione lyase-like protein terB (197 aa).

Positions 1–19 (MARFAVLQLLLPLAAGLTG) are cleaved as a signal peptide. N-linked (GlcNAc...) asparagine glycans are attached at residues N82, N99, and N140.

The protein belongs to the glyoxalase I family.

Its function is as follows. Lactoylglutathione lyase-like protein; part of the gene cluster that mediates the biosynthesis of terrein, a fungal metabolite with ecological, antimicrobial, antiproliferative, and antioxidative activities. The first step in the pathway is performed by the polyketide synthase terA that produces 4-hydroxy-6-methylpyranon (4-HMP), orsellinic acid (OA), and 2,3-dehydro-6-hydroxymellein (2,3-dehydro-6-HM) by condensing acetyl-CoA with two, three, or four malonyl-CoA units, respectively. 4-HMP and OA are not pathway intermediates, but are rather shunt or side products. 2,3-dehydro-6-HM is further converted to 6-hydroxymellein (6-HM) by the 6-hydroxymellein synthase terB. The monooxygenases terC and terD, the multicopper oxidase terE and the Kelch-like protein terF are then involved in the transformation of 6-HM to terrein. Even if they are co-regulated with the other terrein cluster genes, terH and terI seem to be dispensable for terrein production; whereas one or both of the 2 transporters terG and terJ are probably required for efficient secretion of metabolites. The polypeptide is Lactoylglutathione lyase-like protein terB (Aspergillus terreus (strain NIH 2624 / FGSC A1156)).